We begin with the raw amino-acid sequence, 148 residues long: Leghemoglobin 3 (148 aa).

Residues 2-148 enclose the Globin domain; the sequence is GFTEKQEALV…LSAAIKKAMS (147 aa). At Tyr30 the chain carries Nitrated tyrosine. Ser45 contacts heme b. Ser45 bears the Phosphoserine mark. Position 63 (His63) interacts with O2. Residues Lys66, His95, and Lys98 each contribute to the heme b site. The residue at position 136 (Tyr136) is a Nitrated tyrosine.

Belongs to the plant globin family. In terms of assembly, monomer. In terms of processing, nitrated in effective nodules and particularly in hypoxic conditions; this mechanism may play a protective role in the symbiosis by buffering toxic peroxynitrite NO(2)(-). Nitration level decrease during nodule senescence. Phosphorylation at Ser-45 disrupts the molecular environment of its porphyrin ring oxygen binding pocket, thus leading to a reduced oxygen consumption and to the delivery of oxygen O(2) to symbiosomes. Stem nodules.

It localises to the cytoplasm. Its subcellular location is the cytosol. The protein resides in the nucleus. In terms of biological role, leghemoglobin that reversibly binds oxygen O(2) through a pentacoordinated heme iron. In stem nodules, facilitates the diffusion of oxygen to the bacteroids while preventing the bacterial nitrogenase from being inactivated by buffering dioxygen, nitric oxide and carbon monoxide, and promoting the formation of reactive oxygen species (ROS, e.g. H(2)O(2)). This role is essential for symbiotic nitrogen fixation (SNF). The chain is Leghemoglobin 3 from Sesbania rostrata.